Consider the following 434-residue polypeptide: UPF0053 protein YrkA (434 aa).

The CNNM transmembrane domain occupies 1–201; it reads MTTINLIIFT…YKSGEINQNE (201 aa). A run of 3 helical transmembrane segments spans residues 7–27, 64–84, and 101–121; these read IIFT…FAIV, LGIT…FEVI, and VLIL…VGEL. CBS domains are found at residues 220–282 and 289–346; these read MIPR…KIKE and HINP…IRDE.

This sequence belongs to the UPF0053 family.

The protein resides in the cell membrane. The protein is UPF0053 protein YrkA (yrkA) of Bacillus subtilis (strain 168).